The primary structure comprises 265 residues: Bradykinin-potentiating and C-type natriuretic peptides (265 aa).

Residues 1-23 (MVLSRLAASGLLLLALLALSVDG) form the signal peptide. Positions 24-30 (KPVQQWA) are excised as a propeptide. A Pyrrolidone carboxylic acid modification is found at Gln-31. Positions 44 to 50 (LKVQQWA) are excised as a propeptide. Pyrrolidone carboxylic acid is present on Gln-51. Positions 64 to 70 (LTVQQWA) are excised as a propeptide. Gln-71 carries the post-translational modification Pyrrolidone carboxylic acid. Residues 81 to 87 (LTVQQWA) constitute a propeptide that is removed on maturation. Gln-88 carries the pyrrolidone carboxylic acid modification. Positions 100–106 (LEVQQWA) are excised as a propeptide. Gln-107 bears the Pyrrolidone carboxylic acid mark. Positions 118–120 (APL) are excised as a propeptide. Gln-121 is modified (pyrrolidone carboxylic acid). A propeptide is located at residue Val-126. Gln-127 is subject to Pyrrolidone carboxylic acid. Residues 132–241 (LLQPHESPAS…GGARRLKGLA (110 aa)) constitute a propeptide that is removed on maturation. The interval 153 to 211 (GPEAASGVPSAGAEVGRSGSKAPAAPHRLSKSKGAAATSAASRPMRDLRPDGKQARQNW) is disordered. A compositionally biased stretch (low complexity) spans 184–194 (SKGAAATSAAS). Residues 196–206 (PMRDLRPDGKQ) are compositionally biased toward basic and acidic residues. A disulfide bond links Cys-249 and Cys-265.

In the N-terminal section; belongs to the bradykinin-potentiating peptide family. It in the C-terminal section; belongs to the natriuretic peptide family. Expressed by the venom gland.

The protein resides in the secreted. The protein localises to the cytoplasm. It localises to the cytosol. Its function is as follows. Modestly inhibits ACE (with highest affinity for the N-site) and reveals strong bradykinin-potentiating activity. Induces nitric oxide (NO) production depended on muscarinic acetylcholine receptor M1 subtype (CHRM1) and bradykinin B2 receptor (BDKRB2) activation. Both these receptors contribute to the vasodilation induced by this peptide that may have an indirect action on BDKRB2 and a direct agonistic action on CHRM1. In terms of biological role, peptide with several activities. It inhibits the activity of the angiotensin-converting enzyme (ACE) by a preferential interaction with its C-domain. It evokes transient hypotension (-14 mmHg) similar to that evoked by 0.5 ug of bradykinin, when injected alone into rats. It has a high bradykinin-potentiating effect (120%), when 60 nmol of BPP-10c are coinjected with 0.5 ug of bradykinin into rats. Does not affect angiotensin-1 pressor effects. Shows potent and long-lasting antihypertensive activity as well as a reduction of the heart rate. It also binds and dose-dependently promotes the activation of cytosolic argininosuccinate synthase (ASS1), an enzyme that catalyzes the conversion of citrulline, L-aspartate and ATP to argininosuccinate, AMP and pyrophosphate. It also enhances ASS1-dependent arginine production in HEK 293 cells, as well as in spontaneous hypertensive rat (SHR) and Wistar rat plasma. In addition, it induces the production of nitric-oxide (NO) by HUVEC cells via the endothelial nitric-oxide synthase (NOS3), which use arginine as a substrate and produce NO. It has been shown to be internalized by ASS1-expressing endothelial (HUVEC) and kidney (HEK 293) cells, and is detected homogenously distributed within the cell cytoplasm for up to 2 hours. Functionally, has a vasorelaxant activity in rat aortic strips and a diuretic potency in anesthetized rats. May act by activating natriuretic receptors (NPR1 and/or NPR2). This is Bradykinin-potentiating and C-type natriuretic peptides from Bothrops insularis (Golden lancehead).